Consider the following 304-residue polypeptide: GTPase Era (304 aa).

An Era-type G domain is found at 9–177 (HSGFVAIVGR…VTTLSQHMPE (169 aa)). A G1 region spans residues 17-24 (GRPNVGKS). A GTP-binding site is contributed by 17 to 24 (GRPNVGKS). The interval 43-47 (QTTRN) is G2. The tract at residues 64–67 (DTPG) is G3. GTP is bound by residues 64-68 (DTPGI) and 127-130 (NKID). The segment at 127 to 130 (NKID) is G4. The segment at 156 to 158 (ISA) is G5. A KH type-2 domain is found at 208–285 (TRQEVPHSVA…YLELWVKVSE (78 aa)).

The protein belongs to the TRAFAC class TrmE-Era-EngA-EngB-Septin-like GTPase superfamily. Era GTPase family. In terms of assembly, monomer.

Its subcellular location is the cytoplasm. The protein localises to the cell membrane. Its function is as follows. An essential GTPase that binds both GDP and GTP, with rapid nucleotide exchange. Plays a role in 16S rRNA processing and 30S ribosomal subunit biogenesis and possibly also in cell cycle regulation and energy metabolism. The protein is GTPase Era of Pediococcus pentosaceus (strain ATCC 25745 / CCUG 21536 / LMG 10740 / 183-1w).